We begin with the raw amino-acid sequence, 194 residues long: Fatty acid metabolism regulator protein (194 aa).

In terms of domain architecture, HTH tetR-type spans 5 to 65 (RPKYMQIIDA…SLFKEKMGQF (61 aa)). A DNA-binding region (H-T-H motif) is located at residues 28 to 47 (QVSKIAKQAGVADGTIYLYF).

In terms of assembly, homodimer. Binds to DNA.

It localises to the cytoplasm. In terms of biological role, transcriptional regulator in fatty acid degradation. Represses transcription of genes required for fatty acid transport and beta-oxidation, including acdA, fadA, fadB, fadE, fadF, fadG, fadH, fadM, fadN, lcfA and lcfB. Binding of FadR to DNA is specifically inhibited by long chain fatty acyl-CoA compounds of 14-20 carbon atoms in length. This Bacillus subtilis (strain 168) protein is Fatty acid metabolism regulator protein (fadR).